Reading from the N-terminus, the 149-residue chain is NPC intracellular cholesterol transporter 2 (149 aa).

The signal sequence occupies residues methionine 1 to alanine 21. Disulfide bonds link cysteine 27–cysteine 140, cysteine 42–cysteine 47, and cysteine 93–cysteine 99. Asparagine 58 carries an N-linked (GlcNAc...) asparagine glycan. Lysine 116 bears the N6-acetyllysine mark.

It belongs to the NPC2 family. Interacts with NPC1 (via the second lumenal domain) in a cholestrol-dependent manner. Interacts with NUS1/NgBR, the interaction stabilizes NCP2 and regulates cholesterol trafficking. Interacts with DHDDS. Interacts with NEDD4L (via C2 domain). Interacts with NPC1L1. Epididymis. High levels are found in the caput and corpus regions. Weaker levels in the distal cauda and in the efferent ducts.

It is found in the secreted. Its subcellular location is the endoplasmic reticulum. The protein resides in the lysosome. It carries out the reaction cholesterol(in) = cholesterol(out). Functionally, intracellular cholesterol transporter which acts in concert with NPC1 and plays an important role in the egress of cholesterol from the lysosomal compartment. Unesterified cholesterol that has been released from LDLs in the lumen of the late endosomes/lysosomes is transferred by NPC2 to the cholesterol-binding pocket in the N-terminal domain of NPC1. May bind and mobilize cholesterol that is associated with membranes. NPC2 binds cholesterol with a 1:1 stoichiometry. Can bind a variety of sterols, including lathosterol, desmosterol and the plant sterols stigmasterol and beta-sitosterol. The secreted form of NCP2 regulates biliary cholesterol secretion via stimulation of ABCG5/ABCG8-mediated cholesterol transport. The chain is NPC intracellular cholesterol transporter 2 from Canis lupus familiaris (Dog).